A 352-amino-acid polypeptide reads, in one-letter code: B1 bradykinin receptor (352 aa).

At Met-1–Thr-41 the chain is on the extracellular side. Asn-13 and Asn-21 each carry an N-linked (GlcNAc...) asparagine glycan. Residues Phe-42–Leu-62 traverse the membrane as a helical segment. The Cytoplasmic segment spans residues Leu-63 to Glu-72. A helical membrane pass occupies residues Ile-73–Ala-93. The Extracellular portion of the chain corresponds to Glu-94–Arg-110. A disulfide bridge connects residues Cys-109 and Cys-188. A helical membrane pass occupies residues Gly-111–Ser-131. Residues Gln-132–Ala-153 lie on the Cytoplasmic side of the membrane. A helical transmembrane segment spans residues Arg-154–Leu-174. The Extracellular portion of the chain corresponds to Arg-175–Asn-206. The N-linked (GlcNAc...) asparagine glycan is linked to Asn-184. The helical transmembrane segment at Ile-207 to Ser-227 threads the bilayer. Residues Leu-228–Leu-250 lie on the Cytoplasmic side of the membrane. A helical transmembrane segment spans residues Ile-251–Leu-271. Topologically, residues Glu-272–Gln-294 are extracellular. Residues Leu-295 to Gly-315 form a helical membrane-spanning segment. Residues Arg-316–Asn-352 lie on the Cytoplasmic side of the membrane. Cys-329 carries S-palmitoyl cysteine lipidation.

It belongs to the G-protein coupled receptor 1 family. Bradykinin receptor subfamily. BDKRB1 sub-subfamily.

Its subcellular location is the cell membrane. This is a receptor for bradykinin. Could be a factor in chronic pain and inflammation. The protein is B1 bradykinin receptor (BDKRB1) of Chlorocebus aethiops (Green monkey).